Reading from the N-terminus, the 357-residue chain is Alpha-2-macroglobulin receptor-associated protein (357 aa).

A signal peptide spans 1 to 34 (MAPRRVRSFLRGLPALLLLLLFLGPWPAASHGGK). Residues 32–52 (GGKYSREKNQPKPSPKRESGE) are disordered. Positions 35 to 52 (YSREKNQPKPSPKRESGE) are enriched in basic and acidic residues. A phosphoserine mark is found at Ser-50 and Ser-135. A coiled-coil region spans residues 219–310 (SRHTELKEKL…AHEKLRHAES (92 aa)). The interval 237–353 (RLRRVSHQGY…DLSGRISRAR (117 aa)) is LDL receptor binding. Thr-248 carries the phosphothreonine modification. An N-linked (GlcNAc...) asparagine glycan is attached at Asn-268. Residues 354-357 (HNEL) carry the Prevents secretion from ER motif.

Belongs to the alpha-2-MRAP family. In terms of assembly, interacts with the LRP1/alpha-2-macroglobulin receptor heavy and light chains; the interaction is transient and coincides with a reduction of ligand binding by the receptor. Interacts with LRP2/glycoprotein 330. Interacts with LRP1B; binding is followed by internalization and degradation. Interacts with LDLR. Interacts with SORL1. Interacts with LRP1; this interaction is followed by rapid internalization. Post-translationally, N-glycosylated.

It localises to the rough endoplasmic reticulum lumen. The protein localises to the endoplasmic reticulum-Golgi intermediate compartment lumen. It is found in the golgi apparatus. The protein resides in the cis-Golgi network. Its subcellular location is the golgi apparatus lumen. It localises to the endosome lumen. The protein localises to the cell surface. Molecular chaperone for LDL receptor-related proteins that may regulate their ligand binding activity along the secretory pathway. The polypeptide is Alpha-2-macroglobulin receptor-associated protein (Homo sapiens (Human)).